Reading from the N-terminus, the 456-residue chain is N(6)-adenosine-methyltransferase non-catalytic subunit METTL14 (456 aa).

Residues T50 to D75 form a disordered region. Interaction with METTL3 regions lie at residues R135–D136 and S237–G238. The interval R245–R254 is positively charged region required for RNA-binding. 2 interaction with METTL3 regions span residues R255–D258 and K278–H287. Positions K297–R298 are positively charged region required for RNA-binding. The interaction with METTL3 stretch occupies residues N308–D312. The disordered stretch occupies residues E393–R456. Phosphoserine is present on S399. Gly residues predominate over residues G409–A423. The span at R425–G440 shows a compositional bias: basic and acidic residues. Positions F441–R450 are enriched in gly residues.

Belongs to the MT-A70-like family. As to quaternary structure, heterodimer; heterodimerizes with METTL3 to form an antiparallel heterodimer that constitutes an active methyltransferase. Component of the WMM complex, a N6-methyltransferase complex composed of a catalytic subcomplex, named MAC, and of an associated subcomplex, named MACOM. The MAC subcomplex is composed of METTL3 and METTL14. The MACOM subcomplex is composed of WTAP, ZC3H13, CBLL1/HAKAI, VIRMA, and, in some cases of RBM15 (RBM15 or RBM15B).

The protein resides in the nucleus. Functionally, the METTL3-METTL14 heterodimer forms a N6-methyltransferase complex that methylates adenosine residues at the N(6) position of some mRNAs and regulates the circadian clock, differentiation of embryonic stem cells and cortical neurogenesis. In the heterodimer formed with METTL3, METTL14 constitutes the RNA-binding scaffold that recognizes the substrate rather than the catalytic core. N6-methyladenosine (m6A), which takes place at the 5'-[AG]GAC-3' consensus sites of some mRNAs, plays a role in mRNA stability and processing. M6A acts as a key regulator of mRNA stability by promoting mRNA destabilization and degradation. In embryonic stem cells (ESCs), m6A methylation of mRNAs encoding key naive pluripotency-promoting transcripts results in transcript destabilization. M6A regulates spermatogonial differentiation and meiosis and is essential for male fertility and spermatogenesis. M6A also regulates cortical neurogenesis: m6A methylation of transcripts related to transcription factors, neural stem cells, the cell cycle and neuronal differentiation during brain development promotes their destabilization and decay, promoting differentiation of radial glial cells. The polypeptide is N(6)-adenosine-methyltransferase non-catalytic subunit METTL14 (Homo sapiens (Human)).